Consider the following 44-residue polypeptide: uncharacterized protein (44 aa).

The chain crosses the membrane as a helical span at residues 6 to 26 (SILIRGGGGVLIVLILLLWIV).

The protein resides in the membrane. This is an uncharacterized protein from Ornithodoros (relapsing fever ticks).